We begin with the raw amino-acid sequence, 208 residues long: uncharacterized protein (208 aa).

The first 16 residues, 1–16 (MTRVALLTTGRELSQA), serve as a signal peptide directing secretion. Disordered regions lie at residues 1 to 95 (MTRV…VRGQ) and 145 to 176 (RVTKVSSSGPNSTPLPAARIGPGTNNAPSAAD). Positions 16-25 (AAPPARARTP) are enriched in low complexity. A compositionally biased stretch (basic and acidic residues) spans 32 to 43 (RGERPDDGGHAP). The segment covering 44-54 (HRDRRVNQRRR) has biased composition (basic residues). Over residues 55–95 (QVGDRRAQRGVDEHPWRRPDERPNDHLPQRNSERPEGVRGQ) the composition is skewed to basic and acidic residues. 2 stretches are compositionally biased toward polar residues: residues 148–158 (KVSSSGPNSTP) and 167–176 (GTNNAPSAAD).

This is an uncharacterized protein from Mycobacterium tuberculosis (strain CDC 1551 / Oshkosh).